Reading from the N-terminus, the 324-residue chain is Aprataxin (324 aa).

The FHA-like domain occupies 23–72 (SVTLGRGPDTKIKDKKCSREQVELRADCNRGFVTVKQLGVNPTLVDDVVV). Positions 100 to 160 (TEDTSRSKPS…QGLKASMQDP (61 aa)) are disordered. Positions 111–125 (RAQQIQSPTKTTADV) are enriched in polar residues. The HIT domain maps to 150-255 (SQGLKASMQD…ISQDFDSPCL (106 aa)). Interaction with DNA substrate regions lie at residues 175–179 (DKYPK) and 237–238 (SM). The Histidine triad motif signature appears at 240–244 (HVHLH). Catalysis depends on His242, which acts as the Tele-AMP-histidine intermediate. The C2H2-type zinc-finger motif lies at 299-321 (LRCHVCGKEQTTIPKLKDHLKTH).

It is found in the nucleus. The protein localises to the nucleoplasm. It localises to the nucleolus. It carries out the reaction a 5'-end adenosine-5'-diphospho-5'-2'-deoxyribonucleoside-DNA + H2O = a 5'-end 5'-phospho-2'-deoxyribonucleoside-DNA + AMP + 2 H(+). The enzyme catalyses a 5'-end adenosine-5'-diphospho-5'-ribonucleoside-2'-deoxyribonucleotide-DNA + H2O = a 5'-end 5'-phospho-ribonucleoside-2'-deoxyribonucleotide-DNA + AMP + 2 H(+). It catalyses the reaction a 3'-end 2'-deoxyribonucleotide-3'-diphospho-5'-guanosine-DNA + H2O = a 3'-end 2'-deoxyribonucleotide 3'-phosphate-DNA + GMP + 2 H(+). Its function is as follows. DNA-binding protein involved in single-strand DNA break repair, double-strand DNA break repair and base excision repair. Resolves abortive DNA ligation intermediates formed either at base excision sites, or when DNA ligases attempt to repair non-ligatable breaks induced by reactive oxygen species. Catalyzes the release of adenylate groups covalently linked to 5'-phosphate termini, resulting in the production of 5'-phosphate termini that can be efficiently rejoined. Also able to hydrolyze adenosine 5'-monophosphoramidate (AMP-NH(2)) and diadenosine tetraphosphate (AppppA), but with lower catalytic activity. Likewise, catalyzes the release of 3'-linked guanosine (DNAppG) and inosine (DNAppI) from DNA, but has higher specific activity with 5'-linked adenosine (AppDNA). This chain is Aprataxin (aptx), found in Danio rerio (Zebrafish).